Consider the following 340-residue polypeptide: MDVNEFDFNLPESLIAQTPLQDRTASRLLTLNKHTGEIKHTNFKSIIDYLNTGDTLVLNDTKVMPARLFGVKEDTGAKIEMLMLTEHDNGWEVLIKPAKRVTIGTRISFGEGKIVAICVEELDQGGRIMQLNYEGILQERLDELGLMPLPPYIKETLEDQSRYQTVYARATGSAAAPTAGLHFTESLLEDIKAKGINIAYITLHVGLGTFRPVSVDDVESHKMHSEYYEMSEETAKLLNDTRDSGNRIITVGTTSTRTLETIADDSGHFTAQSGWTDIFIYPGYSFKAVDAMITNFHLPKSTLVMLVSSLATKEFIMNAYNEAVNEKYRFFSFGDAMFIY.

This sequence belongs to the QueA family. Monomer.

The protein localises to the cytoplasm. It catalyses the reaction 7-aminomethyl-7-carbaguanosine(34) in tRNA + S-adenosyl-L-methionine = epoxyqueuosine(34) in tRNA + adenine + L-methionine + 2 H(+). It participates in tRNA modification; tRNA-queuosine biosynthesis. Transfers and isomerizes the ribose moiety from AdoMet to the 7-aminomethyl group of 7-deazaguanine (preQ1-tRNA) to give epoxyqueuosine (oQ-tRNA). This is S-adenosylmethionine:tRNA ribosyltransferase-isomerase from Macrococcus caseolyticus (strain JCSC5402) (Macrococcoides caseolyticum).